Reading from the N-terminus, the 348-residue chain is Eukaryotic translation initiation factor 3 subunit H (348 aa).

The segment at 1-25 is disordered; that stretch reads MASRKEGSGAAGGGFGASKGKGKAA. Over residues 9 to 19 the composition is skewed to gly residues; the sequence is GAAGGGFGASK. Residues 35 to 169 form the MPN domain; sequence VQIDGLVVLK…LKAYRLTPKL (135 aa). Low complexity predominate over residues 266-285; the sequence is QQQQKHQYQQRRQQENLQRQ. The disordered stretch occupies residues 266–304; sequence QQQQKHQYQQRRQQENLQRQSRGEAPLPEEDINKLFKPP.

The protein belongs to the eIF-3 subunit H family. In terms of assembly, component of the eukaryotic translation initiation factor 3 (eIF-3) complex, which is composed of 13 subunits: EIF3A, EIF3B, EIF3C, EIF3D, EIF3E, EIF3F, EIF3G, EIF3H, EIF3I, EIF3J, EIF3K, EIF3L and EIF3M.

The protein resides in the cytoplasm. In terms of biological role, component of the eukaryotic translation initiation factor 3 (eIF-3) complex, which is involved in protein synthesis of a specialized repertoire of mRNAs and, together with other initiation factors, stimulates binding of mRNA and methionyl-tRNAi to the 40S ribosome. The eIF-3 complex specifically targets and initiates translation of a subset of mRNAs involved in cell proliferation. The chain is Eukaryotic translation initiation factor 3 subunit H from Gallus gallus (Chicken).